The chain runs to 1150 residues: ATP-dependent helicase/deoxyribonuclease subunit B (1150 aa).

Residue 8–15 (GRAGSGKS) coordinates ATP. The [4Fe-4S] cluster site is built by C786, C1106, C1109, and C1115.

The protein belongs to the helicase family. AddB/RexB type 1 subfamily. Heterodimer of AddA and AddB. Mg(2+) serves as cofactor. The cofactor is [4Fe-4S] cluster.

In terms of biological role, the heterodimer acts as both an ATP-dependent DNA helicase and an ATP-dependent, dual-direction single-stranded exonuclease. Recognizes the chi site generating a DNA molecule suitable for the initiation of homologous recombination. The AddB subunit has 5' -&gt; 3' nuclease activity but not helicase activity. The chain is ATP-dependent helicase/deoxyribonuclease subunit B from Clostridium botulinum (strain Langeland / NCTC 10281 / Type F).